The following is a 399-amino-acid chain: Methylthioribose kinase (399 aa).

ATP contacts are provided by residues Asn40, Lys57, and 111–113 (EDL). Asp229 contributes to the substrate binding site. 246–248 (DAE) provides a ligand contact to ATP. Arg344 contacts substrate.

Belongs to the methylthioribose kinase family. In terms of assembly, homodimer.

It carries out the reaction 5-(methylsulfanyl)-D-ribose + ATP = 5-(methylsulfanyl)-alpha-D-ribose 1-phosphate + ADP + H(+). It functions in the pathway amino-acid biosynthesis; L-methionine biosynthesis via salvage pathway; S-methyl-5-thio-alpha-D-ribose 1-phosphate from S-methyl-5'-thioadenosine (hydrolase route): step 2/2. Its function is as follows. Catalyzes the phosphorylation of methylthioribose into methylthioribose-1-phosphate. The protein is Methylthioribose kinase of Klebsiella pneumoniae (strain 342).